The following is a 69-amino-acid chain: Small ribosomal subunit protein bS21 (69 aa).

Residues 49-69 form a disordered region; sequence IESAKRKAEKKKRLFSKKDKA.

This sequence belongs to the bacterial ribosomal protein bS21 family.

This Leptospira borgpetersenii serovar Hardjo-bovis (strain JB197) protein is Small ribosomal subunit protein bS21.